The chain runs to 213 residues: Small ribosomal subunit protein uS5 (213 aa).

One can recognise an S5 DRBM domain in the interval 49 to 112 (LEEEVMDVNL…DNAKYNLIKV (64 aa)).

It belongs to the universal ribosomal protein uS5 family. Part of the 30S ribosomal subunit. Contacts protein S4.

Functionally, with S4 and S12 plays an important role in translational accuracy. This is Small ribosomal subunit protein uS5 from Methanobrevibacter smithii (strain ATCC 35061 / DSM 861 / OCM 144 / PS).